Consider the following 315-residue polypeptide: ATP synthase gamma chain (315 aa).

Belongs to the ATPase gamma chain family. As to quaternary structure, F-type ATPases have 2 components, CF(1) - the catalytic core - and CF(0) - the membrane proton channel. CF(1) has five subunits: alpha(3), beta(3), gamma(1), delta(1), epsilon(1). CF(0) has three main subunits: a, b and c.

It is found in the cellular thylakoid membrane. Functionally, produces ATP from ADP in the presence of a proton gradient across the membrane. The gamma chain is believed to be important in regulating ATPase activity and the flow of protons through the CF(0) complex. This chain is ATP synthase gamma chain, found in Cyanothece sp. (strain PCC 7425 / ATCC 29141).